A 298-amino-acid polypeptide reads, in one-letter code: Ribosomal RNA small subunit methyltransferase H (298 aa).

S-adenosyl-L-methionine is bound by residues 31–33, aspartate 50, tyrosine 80, aspartate 95, and glutamine 102; that span reads GGH. The tract at residues 255 to 298 is disordered; that stretch reads AEKDLYGNTNKPFKSVGKAIDPDDEEKERNNRARSARLRIAERE.

It belongs to the methyltransferase superfamily. RsmH family.

The protein localises to the cytoplasm. It catalyses the reaction cytidine(1402) in 16S rRNA + S-adenosyl-L-methionine = N(4)-methylcytidine(1402) in 16S rRNA + S-adenosyl-L-homocysteine + H(+). Functionally, specifically methylates the N4 position of cytidine in position 1402 (C1402) of 16S rRNA. The protein is Ribosomal RNA small subunit methyltransferase H of Cytophaga hutchinsonii (strain ATCC 33406 / DSM 1761 / CIP 103989 / NBRC 15051 / NCIMB 9469 / D465).